A 186-amino-acid polypeptide reads, in one-letter code: ATP synthase subunit delta (186 aa).

The protein belongs to the ATPase delta chain family. In terms of assembly, F-type ATPases have 2 components, F(1) - the catalytic core - and F(0) - the membrane proton channel. F(1) has five subunits: alpha(3), beta(3), gamma(1), delta(1), epsilon(1). CF(0) has four main subunits: a(1), b(1), b'(1) and c(10-14). The alpha and beta chains form an alternating ring which encloses part of the gamma chain. F(1) is attached to F(0) by a central stalk formed by the gamma and epsilon chains, while a peripheral stalk is formed by the delta, b and b' chains.

The protein resides in the cell inner membrane. Its function is as follows. F(1)F(0) ATP synthase produces ATP from ADP in the presence of a proton or sodium gradient. F-type ATPases consist of two structural domains, F(1) containing the extramembraneous catalytic core and F(0) containing the membrane proton channel, linked together by a central stalk and a peripheral stalk. During catalysis, ATP synthesis in the catalytic domain of F(1) is coupled via a rotary mechanism of the central stalk subunits to proton translocation. In terms of biological role, this protein is part of the stalk that links CF(0) to CF(1). It either transmits conformational changes from CF(0) to CF(1) or is implicated in proton conduction. The protein is ATP synthase subunit delta of Dinoroseobacter shibae (strain DSM 16493 / NCIMB 14021 / DFL 12).